Consider the following 459-residue polypeptide: Cobyrinate a,c-diamide synthase (459 aa).

Residues 249-446 form the GATase cobBQ-type domain; sequence RIGMAFDEAF…VHTHFASRPG (198 aa). The active-site Nucleophile is the Cys332.

The protein belongs to the CobB/CbiA family. Requires Mg(2+) as cofactor.

The enzyme catalyses cob(II)yrinate + 2 L-glutamine + 2 ATP + 2 H2O = cob(II)yrinate a,c diamide + 2 L-glutamate + 2 ADP + 2 phosphate + 2 H(+). The protein operates within cofactor biosynthesis; adenosylcobalamin biosynthesis; cob(II)yrinate a,c-diamide from sirohydrochlorin (anaerobic route): step 10/10. Catalyzes the ATP-dependent amidation of the two carboxylate groups at positions a and c of cobyrinate, using either L-glutamine or ammonia as the nitrogen source. The chain is Cobyrinate a,c-diamide synthase from Syntrophotalea carbinolica (strain DSM 2380 / NBRC 103641 / GraBd1) (Pelobacter carbinolicus).